The sequence spans 199 residues: V-type ATP synthase subunit E (199 aa).

This sequence belongs to the V-ATPase E subunit family.

Functionally, produces ATP from ADP in the presence of a proton gradient across the membrane. In Borreliella afzelii (strain PKo) (Borrelia afzelii), this protein is V-type ATP synthase subunit E.